The sequence spans 338 residues: Anthranilate phosphoribosyltransferase (338 aa).

Residues glycine 81, 84–85, threonine 89, 91–94, 109–117, and alanine 121 contribute to the 5-phospho-alpha-D-ribose 1-diphosphate site; these read GD, NIST, and KHGNRALSS. Glycine 81 serves as a coordination point for anthranilate. Serine 93 provides a ligand contact to Mg(2+). Asparagine 112 provides a ligand contact to anthranilate. Arginine 167 lines the anthranilate pocket. Residues aspartate 225 and glutamate 226 each coordinate Mg(2+).

Belongs to the anthranilate phosphoribosyltransferase family. In terms of assembly, homodimer. It depends on Mg(2+) as a cofactor.

The catalysed reaction is N-(5-phospho-beta-D-ribosyl)anthranilate + diphosphate = 5-phospho-alpha-D-ribose 1-diphosphate + anthranilate. It participates in amino-acid biosynthesis; L-tryptophan biosynthesis; L-tryptophan from chorismate: step 2/5. Catalyzes the transfer of the phosphoribosyl group of 5-phosphorylribose-1-pyrophosphate (PRPP) to anthranilate to yield N-(5'-phosphoribosyl)-anthranilate (PRA). This is Anthranilate phosphoribosyltransferase from Rhizobium johnstonii (strain DSM 114642 / LMG 32736 / 3841) (Rhizobium leguminosarum bv. viciae).